Here is a 229-residue protein sequence, read N- to C-terminus: UPF0173 metal-dependent hydrolase SAOUHSC_01815 (229 aa).

This sequence belongs to the UPF0173 family.

The sequence is that of UPF0173 metal-dependent hydrolase SAOUHSC_01815 from Staphylococcus aureus (strain NCTC 8325 / PS 47).